Reading from the N-terminus, the 420-residue chain is Dihydrolipoyllysine-residue succinyltransferase component of 2-oxoglutarate dehydrogenase complex (420 aa).

The Lipoyl-binding domain maps to 3 to 78 (KINILVPDLP…ISQQTLGEIN (76 aa)). Lysine 44 is subject to N6-lipoyllysine. Residues histidine 391 and aspartate 395 contribute to the active site.

Belongs to the 2-oxoacid dehydrogenase family. As to quaternary structure, forms a 24-polypeptide structural core with octahedral symmetry. Part of the 2-oxoglutarate dehydrogenase (OGDH) complex composed of E1 (2-oxoglutarate dehydrogenase), E2 (dihydrolipoamide succinyltransferase) and E3 (dihydrolipoamide dehydrogenase); the complex contains multiple copies of the three enzymatic components (E1, E2 and E3). Requires (R)-lipoate as cofactor.

The enzyme catalyses N(6)-[(R)-dihydrolipoyl]-L-lysyl-[protein] + succinyl-CoA = N(6)-[(R)-S(8)-succinyldihydrolipoyl]-L-lysyl-[protein] + CoA. It participates in amino-acid degradation; L-lysine degradation via saccharopine pathway; glutaryl-CoA from L-lysine: step 6/6. E2 component of the 2-oxoglutarate dehydrogenase (OGDH) complex which catalyzes the second step in the conversion of 2-oxoglutarate to succinyl-CoA and CO(2). This Buchnera aphidicola subsp. Acyrthosiphon pisum (strain APS) (Acyrthosiphon pisum symbiotic bacterium) protein is Dihydrolipoyllysine-residue succinyltransferase component of 2-oxoglutarate dehydrogenase complex (sucB).